A 423-amino-acid polypeptide reads, in one-letter code: Keratin, type I cytoskeletal 18 (423 aa).

The residue at position 2 (Ser-2) is an N-acetylserine. The interval 2–71 (SFTTRSTTFS…GLAGMGGVQT (70 aa)) is head. Residues Ser-7, Ser-11, Ser-16, and Ser-19 each carry the phosphoserine modification. Residues Ser-31 and Ser-32 each carry the phosphoserine; alternate modification. O-linked (GlcNAc) serine; alternate glycans are attached at residues Ser-31 and Ser-32. At Ser-35 the chain carries Phosphoserine. Tyr-37 carries the post-translational modification Phosphotyrosine. Phosphoserine is present on Ser-43. Residue Arg-46 is modified to Omega-N-methylarginine. Ser-50 carries the phosphoserine; alternate modification. Ser-50 carries O-linked (GlcNAc) serine; alternate glycosylation. At Ser-52 the chain carries Phosphoserine; by MAPKAPK2 and MAPKAPK3. Phosphoserine is present on residues Ser-57 and Ser-60. A necessary for interaction with PNN region spans residues 62–366 (GLAGMGGVQT…EALLNIKVKL (305 aa)). An interaction with TRADD region spans residues 69 to 121 (VQTEKETMQDLNDRLASYLDKVKNLETENRRLESKIREYLEKRGPQGVRDWGH). Residues 72–107 (EKETMQDLNDRLASYLDKVKNLETENRRLESKIREY) are coil 1A. Residues 72 to 384 (EKETMQDLND…RLLEDGDDFS (313 aa)) enclose the IF rod domain. A Glycyl lysine isopeptide (Lys-Gly) (interchain with G-Cter in SUMO2) cross-link involves residue Lys-73. At Ser-85 the chain carries Phosphoserine. The segment at 108–125 (LEKRGPQGVRDWGHYFKT) is linker 1. Lys-124 is modified (N6-acetyllysine). The tract at residues 126 to 217 (IEDLRAQIFA…KNHEEEVQGL (92 aa)) is coil 1B. 2 positions are modified to phosphoserine: Ser-137 and Ser-170. A linker 12 region spans residues 218 to 241 (EAQIASSGLTVEVDAPKSQDLSKI). The tract at residues 236–384 (QDLSKIMADI…RLLEDGDDFS (149 aa)) is interaction with DNAJB6. Lys-240 is covalently cross-linked (Glycyl lysine isopeptide (Lys-Gly) (interchain with G-Cter in SUMO2)). The interval 242-380 (MADIRAQYEQ…ATYRRLLEDG (139 aa)) is coil 2. Phosphothreonine is present on Thr-295. Residues Lys-363 and Lys-365 each participate in a glycyl lysine isopeptide (Lys-Gly) (interchain with G-Cter in SUMO2) cross-link. Positions 381–423 (DDFSLNDALDSSNSMQTVQRTTTRKVVDGKVVSETNDTRVLRH) are tail. 4 positions are modified to phosphoserine: Ser-384, Ser-391, Ser-392, and Ser-394. A Phosphothreonine modification is found at Thr-397. A Glycyl lysine isopeptide (Lys-Gly) (interchain with G-Cter in SUMO2) cross-link involves residue Lys-410.

It belongs to the intermediate filament family. Heterotetramer of two type I and two type II keratins. KRT18 associates with KRT8. Interacts with PNN and mutated CFTR. Interacts with YWHAE, YWHAH and YWHAZ only when phosphorylated. Interacts with DNAJB6, TCHP and TRADD. Interacts with the thrombin-antithrombin complex. Interacts with FAM83H. Interacts with EPPK1. Interacts with PKP1 and PKP2. Phosphorylation increases by IL-6. In terms of processing, proteolytically cleaved by caspases during epithelial cell apoptosis. Cleavage occurs at Asp-231 by either caspase-3, caspase-6 or caspase-7. Post-translationally, dephosphorylated by ethanol. O-GlcNAcylation increases solubility, and decreases stability by inducing proteasomal degradation. Expressed on the plasma membrane of hepatocytes and in the narrow apical portions of supporting cells in the vomeronasal sensory epithelium. Detected in the type III alveolar cells of the lung, in the proliferative crypt epithelium of the small intestine and in the older intragemmal cells of the tongue.

Its subcellular location is the nucleus matrix. The protein localises to the cytoplasm. The protein resides in the perinuclear region. It localises to the nucleus. It is found in the nucleolus. When phosphorylated, plays a role in filament reorganization. Involved in the delivery of mutated CFTR to the plasma membrane. Together with KRT8, is involved in interleukin-6 (IL-6)-mediated barrier protection. Involved in the uptake of thrombin-antithrombin complexes by hepatic cells. The polypeptide is Keratin, type I cytoskeletal 18 (Rattus norvegicus (Rat)).